Reading from the N-terminus, the 281-residue chain is Energy-coupling factor transporter ATP-binding protein EcfA1 (281 aa).

Residues 6-245 (IKSEDLVFKY…VEKIKSIGLD (240 aa)) enclose the ABC transporter domain. Position 44-51 (44-51 (GHNGSGKS)) interacts with ATP.

This sequence belongs to the ABC transporter superfamily. Energy-coupling factor EcfA family. As to quaternary structure, forms a stable energy-coupling factor (ECF) transporter complex composed of 2 membrane-embedded substrate-binding proteins (S component), 2 ATP-binding proteins (A component) and 2 transmembrane proteins (T component).

The protein resides in the cell membrane. Its function is as follows. ATP-binding (A) component of a common energy-coupling factor (ECF) ABC-transporter complex. Unlike classic ABC transporters this ECF transporter provides the energy necessary to transport a number of different substrates. The protein is Energy-coupling factor transporter ATP-binding protein EcfA1 of Clostridium perfringens (strain ATCC 13124 / DSM 756 / JCM 1290 / NCIMB 6125 / NCTC 8237 / Type A).